Here is a 968-residue protein sequence, read N- to C-terminus: Translation initiation factor IF-2 (968 aa).

The span at 51-76 (PAAGASKSEAPAAAPKAPASPAATRP) shows a compositional bias: low complexity. The interval 51–369 (PAAGASKSEA…GVSVPRGDGN (319 aa)) is disordered. The span at 77–87 (APAPGPAAPKA) shows a compositional bias: pro residues. Over residues 93–102 (EAPAAASAPS) the composition is skewed to low complexity. A compositionally biased stretch (pro residues) spans 103–112 (APAPAAPAPA). Composition is skewed to low complexity over residues 113-122 (APAAAASAPS), 128-170 (APST…GNNP), and 239-254 (GARP…PGAR). The segment covering 281 to 336 (GRPGGGGRGPGRPGGAPGTGGAPGAGGGAPAGGGFGKGGRGRGGTQGAFGKGGAGR) has biased composition (gly residues). The span at 337-346 (GKQRKSKRAK) shows a compositional bias: basic residues. The tr-type G domain occupies 461–632 (ARPPVVTVMG…AVLLTADAAL (172 aa)). The segment at 470–477 (GHVDHGKT) is G1. 470-477 (GHVDHGKT) serves as a coordination point for GTP. The G2 stretch occupies residues 495-499 (GITQH). The segment at 520–523 (DTPG) is G3. Residues 520–524 (DTPGH) and 574–577 (NKID) contribute to the GTP site. Residues 574-577 (NKID) are G4. Residues 610-612 (SAR) form a G5 region.

The protein belongs to the TRAFAC class translation factor GTPase superfamily. Classic translation factor GTPase family. IF-2 subfamily.

Its subcellular location is the cytoplasm. One of the essential components for the initiation of protein synthesis. Protects formylmethionyl-tRNA from spontaneous hydrolysis and promotes its binding to the 30S ribosomal subunits. Also involved in the hydrolysis of GTP during the formation of the 70S ribosomal complex. The polypeptide is Translation initiation factor IF-2 (Arthrobacter sp. (strain FB24)).